A 429-amino-acid chain; its full sequence is 4-hydroxy-3-methylbut-2-en-1-yl diphosphate synthase (flavodoxin) (429 aa).

The [4Fe-4S] cluster site is built by Cys310, Cys313, Cys356, and Glu363.

This sequence belongs to the IspG family. It depends on [4Fe-4S] cluster as a cofactor.

It catalyses the reaction (2E)-4-hydroxy-3-methylbut-2-enyl diphosphate + oxidized [flavodoxin] + H2O + 2 H(+) = 2-C-methyl-D-erythritol 2,4-cyclic diphosphate + reduced [flavodoxin]. The protein operates within isoprenoid biosynthesis; isopentenyl diphosphate biosynthesis via DXP pathway; isopentenyl diphosphate from 1-deoxy-D-xylulose 5-phosphate: step 5/6. Functionally, converts 2C-methyl-D-erythritol 2,4-cyclodiphosphate (ME-2,4cPP) into 1-hydroxy-2-methyl-2-(E)-butenyl 4-diphosphate. The polypeptide is 4-hydroxy-3-methylbut-2-en-1-yl diphosphate synthase (flavodoxin) (Bradyrhizobium sp. (strain BTAi1 / ATCC BAA-1182)).